Consider the following 304-residue polypeptide: Porphobilinogen deaminase (304 aa).

Cys240 carries the S-(dipyrrolylmethanemethyl)cysteine modification.

It belongs to the HMBS family. In terms of assembly, monomer. Dipyrromethane is required as a cofactor.

It carries out the reaction 4 porphobilinogen + H2O = hydroxymethylbilane + 4 NH4(+). Its pathway is porphyrin-containing compound metabolism; protoporphyrin-IX biosynthesis; coproporphyrinogen-III from 5-aminolevulinate: step 2/4. Its function is as follows. Tetrapolymerization of the monopyrrole PBG into the hydroxymethylbilane pre-uroporphyrinogen in several discrete steps. This is Porphobilinogen deaminase from Xanthomonas axonopodis pv. citri (strain 306).